Consider the following 489-residue polypeptide: Serine/threonine-protein kinase BSK3 (489 aa).

A lipid anchor (N-myristoyl glycine) is attached at glycine 2. The region spanning 58 to 324 (EYIVSEHGEK…ETEVLSHVLM (267 aa)) is the Protein kinase domain. ATP is bound by residues 64–72 (HGEKAPNVV) and lysine 86. Aspartate 180 serves as the catalytic Proton acceptor. The residue at position 212 (serine 212) is a Phosphoserine.

This sequence belongs to the protein kinase superfamily. Ser/Thr protein kinase family. Interacts with BRI1. Phosphorylated by BRI1 upon brassinolide (BL) treatment. Phosphorylated by ASK7/BIN2 and ASK9/BIL2.

The protein resides in the cell membrane. The catalysed reaction is L-seryl-[protein] + ATP = O-phospho-L-seryl-[protein] + ADP + H(+). The enzyme catalyses L-threonyl-[protein] + ATP = O-phospho-L-threonyl-[protein] + ADP + H(+). Probable serine/threonine kinase that acts as a positive regulator of brassinosteroid (BR) signaling downstream of the receptor kinase BRI1. Mediates signal transduction from BRI1 by functioning as substrate of BRI1. Functions redundantly with BSK4, BSK6, BSK7 and BSK8. The sequence is that of Serine/threonine-protein kinase BSK3 from Arabidopsis thaliana (Mouse-ear cress).